The primary structure comprises 627 residues: MTLEPHYSAKSAASASAFVARSATESSTASTKAAPRKKTYSQSNGIPIRIDNLPPGKTWAQVKYLIGGIIYHTNILQVKMLPPMTSMVPPFITFQSCIVILKNSIDNESLENLLLTLNTYQWDYHDLFVYLLPYTNDSPSLRYPEISDSNNDVRSAPDETKRSISPRYASHVSSVTPQPPSASTPPSQFFSFSPEVSLRKNENITPLPTPVPVPVGVPPLAPPPHGPFSTSMLPMLGAPPGTVPNMQMPYQTTLPSPTAAATAGGPLASPTHYPRRRHFYHQNQSQFQKYMHNSPRNPDTGTGPRLSQQHHLSLRNNKINPSYNEISALYNLNMASNSNNNGNIPTTSTNGDDRALQAKNGGTITPSQTQINHKRLKHIFNEKSFRKQMTNRGMWQLKIINFPPYIPIEFLEKLSESDFNELMNQEKFTVIEIKEKGQLEKFGRLRWTVLKDFIKLKCPKLLRLQERQFLQQQNEASLLNESMDALKISENENTNGSANNSTYTNGGPRTSINNTREFYVGVYEDHEEATLLRFELPEDELEEFNRNLPTTFAQSGNVSDSEGDSKAKYFKVSTIVYNAIVGFHDKELSDLTFESLQDQEYSLGYKIHVMELPPFDEDEFENQRQQF.

Disordered stretches follow at residues 141–187 (LRYP…TPPS) and 490–510 (ENENTNGSANNSTYTNGGPRT). Over residues 491–510 (NENTNGSANNSTYTNGGPRT) the composition is skewed to polar residues. Position 559 is a phosphoserine (serine 559).

This is an uncharacterized protein from Saccharomyces cerevisiae (strain ATCC 204508 / S288c) (Baker's yeast).